The following is a 1527-amino-acid chain: uncharacterized protein (1527 aa).

Coiled-coil stretches lie at residues 262–293, 699–751, 905–932, and 1217–1255; these read NVEISRDKIKKLKDKNEIFNQLINEFGENINE, QQQQ…SEKL, NNLNIINNNQENNNNNNNDLKETIENQI, and KIISSELELEQQQQQQQQQQQQQQQQQQQQQQQQQQKSS. The interval 683-734 is disordered; that stretch reads TNQEQEQDQQDQPPPPQQQQEQQQEQQQQQEQQQQQDQQQQDQQQDQQEKQQ. Residues 700 to 728 show a composition bias toward low complexity; the sequence is QQQEQQQEQQQQQEQQQQQDQQQQDQQQD.

This is an uncharacterized protein from Dictyostelium discoideum (Social amoeba).